The chain runs to 308 residues: MSISATLVKELREKTNAGMMDCKKALEATSGDFNAAVEWLRVKGLGAAAKKADRIAAEGAVFAELHGNTGVVIEINSETDFVARNDGFKALAANVVSHLAKTNLEGDVLAQAYAADSSKKLGDLFTEATATIGEKIVLRRQEKYTATATSLVHTYLHGEGKIGVMIEVGASKPEAVSNPALKTFAQDVALHIAAMNPMAISSEQIPADVVSKEKEILTAKNLESGKKPEMIEKIVEGQIRKFLAENCLLDQPFVKNPDMKVSDLAKSVGKEIGADVTVKRFVRFELGAGIEKKTNDFAAEVAAQMKGH.

An involved in Mg(2+) ion dislocation from EF-Tu region spans residues 79-82 (TDFV).

The protein belongs to the EF-Ts family.

The protein localises to the cytoplasm. Functionally, associates with the EF-Tu.GDP complex and induces the exchange of GDP to GTP. It remains bound to the aminoacyl-tRNA.EF-Tu.GTP complex up to the GTP hydrolysis stage on the ribosome. In Bdellovibrio bacteriovorus (strain ATCC 15356 / DSM 50701 / NCIMB 9529 / HD100), this protein is Elongation factor Ts.